The following is a 154-amino-acid chain: Transcriptional repressor NrdR (154 aa).

A zinc finger lies at 3–34 (CPFCGNDETKVLESRQVEEGTAVRRRRECERC). In terms of domain architecture, ATP-cone spans 49–139 (LIVVKKDGRR…VYREFKDVQR (91 aa)).

Belongs to the NrdR family. Requires Zn(2+) as cofactor.

Functionally, negatively regulates transcription of bacterial ribonucleotide reductase nrd genes and operons by binding to NrdR-boxes. This Desulfitobacterium hafniense (strain DSM 10664 / DCB-2) protein is Transcriptional repressor NrdR.